The following is a 712-amino-acid chain: Ribosomal RNA large subunit methyltransferase K/L (712 aa).

The 112-residue stretch at 42–153 (QALRIVMWSR…KGRASLSIDL (112 aa)) folds into the THUMP domain.

It belongs to the methyltransferase superfamily. RlmKL family.

The protein resides in the cytoplasm. It catalyses the reaction guanosine(2445) in 23S rRNA + S-adenosyl-L-methionine = N(2)-methylguanosine(2445) in 23S rRNA + S-adenosyl-L-homocysteine + H(+). It carries out the reaction guanosine(2069) in 23S rRNA + S-adenosyl-L-methionine = N(2)-methylguanosine(2069) in 23S rRNA + S-adenosyl-L-homocysteine + H(+). Functionally, specifically methylates the guanine in position 2445 (m2G2445) and the guanine in position 2069 (m7G2069) of 23S rRNA. In Stenotrophomonas maltophilia (strain R551-3), this protein is Ribosomal RNA large subunit methyltransferase K/L.